Here is a 125-residue protein sequence, read N- to C-terminus: Protein ApaG (125 aa).

The 125-residue stretch at 1–125 (MINAPRVCVQ…FRLAIPSLIH (125 aa)) folds into the ApaG domain.

The polypeptide is Protein ApaG (Pectobacterium carotovorum subsp. carotovorum (strain PC1)).